Consider the following 107-residue polypeptide: SH3 domain-binding glutamic acid-rich-like protein 2 (107 aa).

The SH3-binding signature appears at 61–67 (QGNPLPP).

This sequence belongs to the SH3BGR family.

It localises to the nucleus. The sequence is that of SH3 domain-binding glutamic acid-rich-like protein 2 (SH3BGRL2) from Bos taurus (Bovine).